Here is a 238-residue protein sequence, read N- to C-terminus: 3-dehydroquinate dehydratase (238 aa).

3-dehydroquinate is bound by residues 35–37 and arginine 68; that span reads ELR. Histidine 131 functions as the Proton donor/acceptor in the catalytic mechanism. Lysine 158 (schiff-base intermediate with substrate) is an active-site residue. 3-dehydroquinate-binding residues include arginine 200 and glutamine 223.

The protein belongs to the type-I 3-dehydroquinase family. In terms of assembly, homodimer.

The catalysed reaction is 3-dehydroquinate = 3-dehydroshikimate + H2O. Its pathway is metabolic intermediate biosynthesis; chorismate biosynthesis; chorismate from D-erythrose 4-phosphate and phosphoenolpyruvate: step 3/7. Functionally, involved in the third step of the chorismate pathway, which leads to the biosynthesis of aromatic amino acids. Catalyzes the cis-dehydration of 3-dehydroquinate (DHQ) and introduces the first double bond of the aromatic ring to yield 3-dehydroshikimate. The sequence is that of 3-dehydroquinate dehydratase from Staphylococcus epidermidis (strain ATCC 35984 / DSM 28319 / BCRC 17069 / CCUG 31568 / BM 3577 / RP62A).